The chain runs to 155 residues: UPF0178 protein ACICU_02858 (155 aa).

The disordered stretch occupies residues 120 to 155 (GAGVQTGGPPPISERDKREFSSALDQTILKQKRKTA).

Belongs to the UPF0178 family.

This is UPF0178 protein ACICU_02858 from Acinetobacter baumannii (strain ACICU).